The following is a 1021-amino-acid chain: Replication factor C subunit 1 (1021 aa).

Disordered stretches follow at residues 1-259 (MSSD…EGAP) and 339-392 (PAKA…GSAS). Residues 90-110 (KVSDELEDDMKPLPAKEVHKE) are compositionally biased toward basic and acidic residues. Residues 123 to 138 (SKRKTPVKPPPSKKLK) show a composition bias toward basic residues. Over residues 197–207 (LDDDGEEDKMD) the composition is skewed to acidic residues. The segment covering 219 to 236 (RGRGGASGGRGRGGGGRG) has biased composition (gly residues). 2 stretches are compositionally biased toward basic and acidic residues: residues 241–255 (GERKDPPHKGEKEVP) and 347–357 (HQSDKNSEKQQ). Residues 257–347 (GAPDCLTGLT…KPAKATVAKH (91 aa)) enclose the BRCT domain. Residues 374 to 392 (NQITTGKNISPKSNKGSAS) are compositionally biased toward polar residues. 465 to 472 (SGPPGIGK) provides a ligand contact to ATP. The disordered stretch occupies residues 931–1021 (VGESLPEENG…AGGSGGKRKR (91 aa)). Positions 945–958 (EGDEEDSSDAENND) are enriched in acidic residues. Basic and acidic residues predominate over residues 965-977 (TKPKLDLQSDKKK). Residues 999 to 1010 (AGRSKASGSAGK) show a composition bias toward low complexity. A compositionally biased stretch (gly residues) spans 1011–1021 (AAGGSGGKRKR).

This sequence belongs to the activator 1 large subunit family. Heterotetramer of subunits RFC2, RFC3, RFC4 and RFC5 that can form a complex with RFC1. In terms of tissue distribution, expressed in roots, leaves, shoot apical meristem (SAM), flag leaves and panicles.

The protein resides in the nucleus. May be involved in DNA replication and thus regulate cell proliferation. This Oryza sativa subsp. japonica (Rice) protein is Replication factor C subunit 1 (RFC1).